The sequence spans 119 residues: V-type proton ATPase subunit F (119 aa).

It belongs to the V-ATPase F subunit family. As to quaternary structure, V-ATPase is a heteromultimeric enzyme made up of two complexes: the ATP-hydrolytic V1 complex and the proton translocation V0 complex. The V1 complex consists of three catalytic AB heterodimers that form a heterohexamer, three peripheral stalks each consisting of EG heterodimers, one central rotor including subunits D and F, and the regulatory subunits C and H. The proton translocation complex V0 consists of the proton transport subunit a, a ring of proteolipid subunits c9c'', rotary subunit d, subunits e and f, and the accessory subunits ATP6AP1/Ac45 and ATP6AP2/PRR. In terms of tissue distribution, expressed in brain (at protein level).

The protein localises to the cytoplasmic vesicle. It localises to the secretory vesicle. Its subcellular location is the synaptic vesicle membrane. The protein resides in the clathrin-coated vesicle membrane. Its function is as follows. Subunit of the V1 complex of vacuolar(H+)-ATPase (V-ATPase), a multisubunit enzyme composed of a peripheral complex (V1) that hydrolyzes ATP and a membrane integral complex (V0) that translocates protons. V-ATPase is responsible for acidifying and maintaining the pH of intracellular compartments and in some cell types, is targeted to the plasma membrane, where it is responsible for acidifying the extracellular environment. This chain is V-type proton ATPase subunit F (ATP6V1F), found in Bos taurus (Bovine).